The chain runs to 160 residues: Phosphopantetheine adenylyltransferase (160 aa).

S9 lines the substrate pocket. Residues 9–10 and H17 each bind ATP; that span reads SF. The substrate site is built by K41, L73, and R87. Residues 88 to 90, E98, and 123 to 129 contribute to the ATP site; these read GLR and YTFLSSS.

Belongs to the bacterial CoaD family. In terms of assembly, homohexamer. The cofactor is Mg(2+).

The protein resides in the cytoplasm. It catalyses the reaction (R)-4'-phosphopantetheine + ATP + H(+) = 3'-dephospho-CoA + diphosphate. It participates in cofactor biosynthesis; coenzyme A biosynthesis; CoA from (R)-pantothenate: step 4/5. Reversibly transfers an adenylyl group from ATP to 4'-phosphopantetheine, yielding dephospho-CoA (dPCoA) and pyrophosphate. The polypeptide is Phosphopantetheine adenylyltransferase (Dictyoglomus turgidum (strain DSM 6724 / Z-1310)).